We begin with the raw amino-acid sequence, 274 residues long: Hematopoietically-expressed homeobox protein hhex (274 aa).

A DNA-binding region (homeobox) is located at residues 139–198 (RKGGQVRFSNDQTIELEKKFETQKYLSPPERKRLAKMLQLSERQVKTWFQNRRAKWRRLK). The tract at residues 197 to 274 (LKQENPQGNK…GDKGFYNCAH (78 aa)) is disordered. Polar residues predominate over residues 237–248 (DEPTSSPTSQET). Positions 249-263 (LDSEVSDDSDQEVDI) are enriched in acidic residues.

As to expression, expressed in the most dorsoanterior endomesoderm of the blastula and gastrula embryo, and later is restricted to the forming liver diverticulum.

It is found in the nucleus. Recognizes the DNA sequence 5'-ATTAA-3'. Transcriptional repressor. Regulates the differentiation of both endothelial and blood cells. Probably plays a role in the proliferation of vascular endothelial cells during blood vessel development. Establishes anterior identity at two levels; acts early to enhance canonical wnt-signaling by repressing expression of tle4, and acts later to inhibit nodal-signaling by directly targeting nodal/nr1 and nodal2/nr2. May play a role in liver development. Induces heart development. This is Hematopoietically-expressed homeobox protein hhex from Xenopus tropicalis (Western clawed frog).